The following is a 930-amino-acid chain: Polypeptide N-acetylgalactosaminyltransferase 5 (930 aa).

Residues 1 to 12 (MNKIRKFFRGSG) lie on the Cytoplasmic side of the membrane. Residues 13 to 35 (RVLAFIFAASVIWLLFDMAALRL) form a helical; Signal-anchor for type II membrane protein membrane-spanning segment. Residues 36-930 (SFSEINAGLL…KWKFEKYYEV (895 aa)) are Lumenal-facing. Residues 190-209 (KQEAPQNYNVSSDTSKQASE) are disordered. Polar residues predominate over residues 193 to 209 (APQNYNVSSDTSKQASE). 3 N-linked (GlcNAc...) asparagine glycosylation sites follow: N198, N213, and N283. Phosphoserine is present on S285. 4 N-linked (GlcNAc...) asparagine glycosylation sites follow: N287, N309, N355, and N387. The tract at residues 327 to 381 (DTKEVPNSKTQTVFPKLLGGSPHKQIPRNQSKTSSSPPALKKAVSQSKPTISGGL) is disordered. Polar residues predominate over residues 353–363 (PRNQSKTSSSP). Intrachain disulfides connect C476-C708, C699-C779, and C812-C825. The tract at residues 485–594 (LPTTSIIMCF…VGWLEPLLER (110 aa)) is catalytic subdomain A. Residues D526 and R555 each contribute to the substrate site. N-linked (GlcNAc...) asparagine glycosylation is present at N568. Position 578 (D578) interacts with Mn(2+). S579 lines the substrate pocket. H580 lines the Mn(2+) pocket. The interval 654 to 716 (IIRCPVMAGG…PCSRVGHIFR (63 aa)) is catalytic subdomain B. W685 is a binding site for substrate. Mn(2+) is bound at residue H713. Residues R716 and Y721 each coordinate substrate. Residues N766, N817, and N835 are each glycosylated (N-linked (GlcNAc...) asparagine). In terms of domain architecture, Ricin B-type lectin spans 794-925 (KAPVVRASGV…MELQQKWKFE (132 aa)). 2 cysteine pairs are disulfide-bonded: C848-C863 and C898-C913. N-linked (GlcNAc...) asparagine glycosylation is present at N902.

Belongs to the glycosyltransferase 2 family. GalNAc-T subfamily. In terms of assembly, interacts with EXT2. Does not interact with EXT1, EXTL1 or EXTL3. It depends on Mn(2+) as a cofactor. In terms of tissue distribution, expressed at low level. Not expressed before E7.5 during embryogenesis. Expressed in dental mesenchyme and tongue. Accumulates in a subset of mesenchymal cells at the ventral-most portions of the 12.5 dpc maxilla and mandible underlying the dental lamina.

It is found in the golgi apparatus membrane. The enzyme catalyses L-seryl-[protein] + UDP-N-acetyl-alpha-D-galactosamine = a 3-O-[N-acetyl-alpha-D-galactosaminyl]-L-seryl-[protein] + UDP + H(+). The catalysed reaction is L-threonyl-[protein] + UDP-N-acetyl-alpha-D-galactosamine = a 3-O-[N-acetyl-alpha-D-galactosaminyl]-L-threonyl-[protein] + UDP + H(+). Its pathway is protein modification; protein glycosylation. Catalyzes the initial reaction in O-linked oligosaccharide biosynthesis, the transfer of an N-acetyl-D-galactosamine residue to a serine or threonine residue on the protein receptor. Has activity toward EA2 peptide substrate, but has a weak activity toward Muc2 or Muc1b substrates. The protein is Polypeptide N-acetylgalactosaminyltransferase 5 (Galnt5) of Mus musculus (Mouse).